The primary structure comprises 529 residues: Peptide chain release factor 3 (529 aa).

The 270-residue stretch at 11-280 (AKRRTFAIIS…GLVEWAPAPM (270 aa)) folds into the tr-type G domain. Residues 20 to 27 (SHPDAGKT), 88 to 92 (DTPGH), and 142 to 145 (NKLD) each bind GTP.

It belongs to the TRAFAC class translation factor GTPase superfamily. Classic translation factor GTPase family. PrfC subfamily.

The protein localises to the cytoplasm. Functionally, increases the formation of ribosomal termination complexes and stimulates activities of RF-1 and RF-2. It binds guanine nucleotides and has strong preference for UGA stop codons. It may interact directly with the ribosome. The stimulation of RF-1 and RF-2 is significantly reduced by GTP and GDP, but not by GMP. This Yersinia pseudotuberculosis serotype O:1b (strain IP 31758) protein is Peptide chain release factor 3.